The chain runs to 66 residues: Large ribosomal subunit protein bL32 (66 aa).

It belongs to the bacterial ribosomal protein bL32 family.

In Rickettsia conorii (strain ATCC VR-613 / Malish 7), this protein is Large ribosomal subunit protein bL32.